The chain runs to 79 residues: Major outer membrane lipoprotein Lpp 2 (79 aa).

A signal peptide spans 1 to 21 (MNRTNQLILGAVVLGSTLLAG). C22 carries the N-palmitoyl cysteine lipid modification. A lipid anchor (S-diacylglycerol cysteine) is attached at C22. 2 consecutive repeats follow at residues 25-35 (NAKIDQLSSDV) and 39-49 (SAKVEQLSNDV). A coiled-coil region spans residues 28 to 69 (IDQLSSDVQTLSAKVEQLSNDVNAMRSDVQAAKDDAARANQR). K79 carries the N6-murein peptidoglycan lysine modification.

The protein belongs to the Lpp family. As to quaternary structure, homotrimer.

It is found in the cell outer membrane. The protein localises to the secreted. It localises to the cell wall. Functionally, plays an important role in virulence. A highly abundant outer membrane lipoprotein that controls the distance between the inner and outer membranes. The only protein known to be covalently linked to the peptidoglycan network (PGN). Also non-covalently binds the PGN. The link between the cell outer membrane and PGN contributes to maintenance of the structural and functional integrity of the cell envelope, and maintains the correct distance between the PGN and the outer membrane. In Salmonella typhimurium (strain LT2 / SGSC1412 / ATCC 700720), this protein is Major outer membrane lipoprotein Lpp 2.